We begin with the raw amino-acid sequence, 254 residues long: Diphthine synthase (254 aa).

S-adenosyl-L-methionine is bound by residues aspartate 83, leucine 86, 111 to 112, leucine 163, and valine 205; that span reads SI.

This sequence belongs to the diphthine synthase family. In terms of assembly, homodimer.

It catalyses the reaction 2-[(3S)-amino-3-carboxypropyl]-L-histidyl-[translation elongation factor 2] + 3 S-adenosyl-L-methionine = diphthine-[translation elongation factor 2] + 3 S-adenosyl-L-homocysteine + 3 H(+). Its pathway is protein modification; peptidyl-diphthamide biosynthesis. S-adenosyl-L-methionine-dependent methyltransferase that catalyzes the trimethylation of the amino group of the modified target histidine residue in translation elongation factor 2 (EF-2), to form an intermediate called diphthine. The three successive methylation reactions represent the second step of diphthamide biosynthesis. This chain is Diphthine synthase, found in Pyrobaculum aerophilum (strain ATCC 51768 / DSM 7523 / JCM 9630 / CIP 104966 / NBRC 100827 / IM2).